The sequence spans 312 residues: Pantothenate kinase (312 aa).

97 to 104 contributes to the ATP binding site; the sequence is GSVAVGKS.

The protein belongs to the prokaryotic pantothenate kinase family.

The protein localises to the cytoplasm. The catalysed reaction is (R)-pantothenate + ATP = (R)-4'-phosphopantothenate + ADP + H(+). It functions in the pathway cofactor biosynthesis; coenzyme A biosynthesis; CoA from (R)-pantothenate: step 1/5. This is Pantothenate kinase from Mycolicibacterium gilvum (strain PYR-GCK) (Mycobacterium gilvum (strain PYR-GCK)).